The sequence spans 160 residues: uncharacterized protein (160 aa).

This is an uncharacterized protein from Escherichia coli (strain K12).